The chain runs to 157 residues: Large ribosomal subunit protein eL24 (157 aa).

Residues 94–157 form a disordered region; sequence RNQKPEVRKA…ISAPRVGGKR (64 aa). The span at 96–117 shows a compositional bias: basic and acidic residues; the sequence is QKPEVRKAQREQAIRAAKEAKK. Residues 123 to 140 show a composition bias toward low complexity; the sequence is KKPAAPSAKASTKTAQKP.

The protein belongs to the eukaryotic ribosomal protein eL24 family. In terms of assembly, component of the large ribosomal subunit.

The protein resides in the cytoplasm. Functionally, component of the large ribosomal subunit. The ribosome is a large ribonucleoprotein complex responsible for the synthesis of proteins in the cell. The chain is Large ribosomal subunit protein eL24 (rpl24) from Pagrus major (Red sea bream).